Here is a 337-residue protein sequence, read N- to C-terminus: DNA-directed RNA polymerase subunit alpha (337 aa).

The alpha N-terminal domain (alpha-NTD) stretch occupies residues 1 to 233 (MVREKVRVST…DLFIPFLHAE (233 aa)). An alpha C-terminal domain (alpha-CTD) region spans residues 267-337 (IALKSIFIDQ…KAFHNPFTEE (71 aa)).

The protein belongs to the RNA polymerase alpha chain family. In plastids the minimal PEP RNA polymerase catalytic core is composed of four subunits: alpha, beta, beta', and beta''. When a (nuclear-encoded) sigma factor is associated with the core the holoenzyme is formed, which can initiate transcription.

It is found in the plastid. The protein resides in the chloroplast. It carries out the reaction RNA(n) + a ribonucleoside 5'-triphosphate = RNA(n+1) + diphosphate. Functionally, DNA-dependent RNA polymerase catalyzes the transcription of DNA into RNA using the four ribonucleoside triphosphates as substrates. This chain is DNA-directed RNA polymerase subunit alpha, found in Eucalyptus globulus subsp. globulus (Tasmanian blue gum).